The following is a 424-amino-acid chain: Tyrosine--tRNA ligase (424 aa).

L-tyrosine is bound at residue Tyr-33. The 'HIGH' region motif lies at 38–47 (PSADSLHIGH). The L-tyrosine site is built by Tyr-170 and Gln-174. Positions 230–234 (KFGKT) match the 'KMSKS' region motif. ATP is bound at residue Lys-233. The S4 RNA-binding domain maps to 357 to 424 (MSLIDALVRC…RRHYHLIRLV (68 aa)).

This sequence belongs to the class-I aminoacyl-tRNA synthetase family. TyrS type 1 subfamily. As to quaternary structure, homodimer.

The protein resides in the cytoplasm. It catalyses the reaction tRNA(Tyr) + L-tyrosine + ATP = L-tyrosyl-tRNA(Tyr) + AMP + diphosphate + H(+). Functionally, catalyzes the attachment of tyrosine to tRNA(Tyr) in a two-step reaction: tyrosine is first activated by ATP to form Tyr-AMP and then transferred to the acceptor end of tRNA(Tyr). The chain is Tyrosine--tRNA ligase from Roseiflexus castenholzii (strain DSM 13941 / HLO8).